A 591-amino-acid chain; its full sequence is L-fucose isomerase (591 aa).

Residues E337 and D361 each act as proton acceptor in the active site. Mn(2+) contacts are provided by E337, D361, and H528.

It belongs to the L-fucose isomerase family. Homohexamer. Mn(2+) is required as a cofactor.

The protein resides in the cytoplasm. The catalysed reaction is L-fucose = L-fuculose. The protein operates within carbohydrate degradation; L-fucose degradation; L-lactaldehyde and glycerone phosphate from L-fucose: step 1/3. Converts the aldose L-fucose into the corresponding ketose L-fuculose. In Salmonella schwarzengrund (strain CVM19633), this protein is L-fucose isomerase.